The chain runs to 196 residues: 7-methyl-GTP pyrophosphatase (196 aa).

Asp-72 (proton acceptor) is an active-site residue.

It belongs to the Maf family. YceF subfamily. The cofactor is a divalent metal cation.

It localises to the cytoplasm. It carries out the reaction N(7)-methyl-GTP + H2O = N(7)-methyl-GMP + diphosphate + H(+). Its function is as follows. Nucleoside triphosphate pyrophosphatase that hydrolyzes 7-methyl-GTP (m(7)GTP). May have a dual role in cell division arrest and in preventing the incorporation of modified nucleotides into cellular nucleic acids. The protein is 7-methyl-GTP pyrophosphatase of Neisseria meningitidis serogroup B (strain ATCC BAA-335 / MC58).